Here is a 183-residue protein sequence, read N- to C-terminus: NADH-quinone oxidoreductase subunit A (183 aa).

Helical transmembrane passes span Ile11 to Leu31, Phe63 to Trp83, and Val98 to Leu118. The interval Thr159 to Glu183 is disordered.

The protein belongs to the complex I subunit 3 family. In terms of assembly, NDH-1 is composed of 14 different subunits. Subunits NuoA, H, J, K, L, M, N constitute the membrane sector of the complex.

Its subcellular location is the cell inner membrane. It catalyses the reaction a quinone + NADH + 5 H(+)(in) = a quinol + NAD(+) + 4 H(+)(out). In terms of biological role, NDH-1 shuttles electrons from NADH, via FMN and iron-sulfur (Fe-S) centers, to quinones in the respiratory chain. The immediate electron acceptor for the enzyme in this species is believed to be ubiquinone. Couples the redox reaction to proton translocation (for every two electrons transferred, four hydrogen ions are translocated across the cytoplasmic membrane), and thus conserves the redox energy in a proton gradient. In Acinetobacter baumannii (strain AYE), this protein is NADH-quinone oxidoreductase subunit A.